Here is a 527-residue protein sequence, read N- to C-terminus: Sensory neuron membrane protein 1 (527 aa).

At 1-10 (MQLQKPLKIG) the chain is on the cytoplasmic side. Residues 11 to 31 (LGMMGAGLFGIIFGWVLFPVI) traverse the membrane as a helical segment. At 32-456 (LKSQLKKEMA…LKNQLFIPKR (425 aa)) the chain is on the extracellular side. N-linked (GlcNAc...) asparagine glycans are attached at residues N67 and N229. 3 disulfides stabilise this stretch: C268–C333, C297–C352, and C335–C341. N440 is a glycosylation site (N-linked (GlcNAc...) asparagine). The helical transmembrane segment at 457-477 (IVSVVKWLLAGVGFVGLVGSL) threads the bilayer. The Cytoplasmic segment spans residues 478–527 (VYQFKGKMINFALSPSSAQVTKVNPEINQQNQPKDISIIGESQNPPKVDM).

It belongs to the CD36 family. In terms of tissue distribution, detected in both male and female antennal tissues. Expression is two to three fold higher in male compared to female antenna.

It localises to the cell membrane. Plays an olfactory role that is not restricted to pheromone sensitivity. The polypeptide is Sensory neuron membrane protein 1 (Ostrinia furnacalis (Asian corn borer)).